The sequence spans 1032 residues: Integrin alpha-4 (1032 aa).

Residues 1-33 (MAWEARREPGPRRAAVRETVMLLLCLGVPTGRP) form the signal peptide. FG-GAP repeat units follow at residues 35–100 (NVDT…PGQT), 110–177 (NGEP…TELS), 185–237 (QDYV…KYKA), 238–291 (FLDK…EKEL), 292–351 (NILH…GAVM), 355–412 (ETNL…GISS), and 416–478 (QRIE…HPES). Residues 35-977 (NVDTESALLY…HHQRPKRYFT (943 aa)) lie on the Extracellular side of the membrane. Asn79 is a glycosylation site (N-linked (GlcNAc...) asparagine). A disulfide bridge links Cys91 with Cys101. Asn138 is a glycosylation site (N-linked (GlcNAc...) asparagine). Intrachain disulfides connect Cys144–Cys165 and Cys183–Cys198. N-linked (GlcNAc...) asparagine glycosylation is present at Asn229. The Ca(2+) site is built by Asp314, Asn316, Asp318, Asp322, Asp377, Asp379, Asp381, Asp385, Asp439, Asp441, Asn443, Tyr445, and Asp447. Asn480 is a glycosylation site (N-linked (GlcNAc...) asparagine). Intrachain disulfides connect Cys486–Cys495 and Cys501–Cys557. 2 N-linked (GlcNAc...) asparagine glycosylation sites follow: Asn518 and Asn538. The SG1 motif lies at 606 to 616 (KKEKDIMKKTI). An intrachain disulfide couples Cys622 to Cys627. Residues Asn626, Asn645, and Asn660 are each glycosylated (N-linked (GlcNAc...) asparagine). Cys698 and Cys711 are disulfide-bonded. 2 N-linked (GlcNAc...) asparagine glycosylation sites follow: Asn806 and Asn821. 2 disulfides stabilise this stretch: Cys852–Cys890 and Cys897–Cys902. Residues 978–1001 (IVIISSSLLLGLIVLLLISYVMWK) form a helical membrane-spanning segment. Residues 1002–1032 (AGFFKRQYKSILQEENRRDSWSYINSKSNDD) are Cytoplasmic-facing. Positions 1003–1007 (GFFKR) match the GFFKR motif motif. At Ser1021 the chain carries Phosphoserine.

Belongs to the integrin alpha chain family. In terms of assembly, heterodimer of an alpha and a beta subunit. The alpha subunit can sometimes be cleaved into two non-covalently associated fragments. Alpha-4 associates with either beta-1 or beta-7. Alpha-4 interacts with PXN, LPXN, and TGFB1I1/HIC5. Interacts with CSPG4 through CSPG4 chondroitin sulfate glycosaminoglycan. Interacts with JAML; integrin alpha-4/beta-1 may regulate leukocyte to endothelial cells adhesion by controlling JAML homodimerization. ITGA4:ITGB1 is found in a ternary complex with CX3CR1 and CX3CL1. Interacts with MDK. ITGA4:ITGB1 interacts with MDK; this interaction mediates MDK-induced osteoblast cells migration through PXN phosphorylation. Integrin ITGA4:ITGB1 interacts with SVEP1 (via Sushi domain 21); thereby inhibits Ca(2+) intracellular signaling and as a result represses vasocontraction. ITGA4:ITGB1 interacts with SELP. ITGA4:ITGB1 interacts with BCAM. Post-translationally, phosphorylation on Ser-1027 inhibits PXN binding. Expressed in vascular smooth muscle cells (at protein level).

The protein localises to the membrane. Integrins alpha-4/beta-1 (VLA-4) and alpha-4/beta-7 are receptors for fibronectin. They recognize one or more domains within the alternatively spliced CS-1 and CS-5 regions of fibronectin. They are also receptors for VCAM1. Integrin alpha-4/beta-1 recognizes the sequence Q-I-D-S in VCAM1. Integrin alpha-4/beta-7 is also a receptor for MADCAM1. It recognizes the sequence L-D-T in MADCAM1. On activated endothelial cells integrin VLA-4 triggers homotypic aggregation for most VLA-4-positive leukocyte cell lines. It may also participate in cytolytic T-cell interactions with target cells. ITGA4:ITGB1 binds to fractalkine (CX3CL1) and may act as its coreceptor in CX3CR1-dependent fractalkine signaling. ITGA4:ITGB1 binds to PLA2G2A via a site (site 2) which is distinct from the classical ligand-binding site (site 1) and this induces integrin conformational changes and enhanced ligand binding to site 1. Integrin ITGA4:ITGB1 represses PRKCA-mediated L-type voltage-gated channel Ca(2+) influx and ROCK-mediated calcium sensitivity in vascular smooth muscle cells via its interaction with SVEP1, thereby inhibiting vasocontraction. This is Integrin alpha-4 (ITGA4) from Homo sapiens (Human).